The sequence spans 212 residues: Ubiquitin-like protein MDY2 (212 aa).

Residues Val74–Pro152 enclose the Ubiquitin-like domain. Residues Pro150–Val177 are disordered.

In terms of assembly, interacts with GET4.

The protein localises to the cytoplasm. Its subcellular location is the cytosol. The protein resides in the nucleus. In terms of biological role, required for efficient mating. Involved in the production of alpha-factor, the KAR9 and TUB1 location to the shmoo tip and nuclear migration into pheromone-induced shmoos. This chain is Ubiquitin-like protein MDY2 (MDY2), found in Saccharomyces cerevisiae (strain ATCC 204508 / S288c) (Baker's yeast).